We begin with the raw amino-acid sequence, 377 residues long: Protein RecA (377 aa).

The span at 1-13 (MSNEGKPLQSTES) shows a compositional bias: polar residues. The segment at 1–20 (MSNEGKPLQSTESTKIDAKS) is disordered. Position 82–89 (82–89 (GPESSGKT)) interacts with ATP. Residues 346–377 (GSEVSANSMRPLASAARQASSRPKLSQVSANG) are disordered. The span at 362–377 (RQASSRPKLSQVSANG) shows a compositional bias: polar residues.

It belongs to the RecA family.

It localises to the cytoplasm. Can catalyze the hydrolysis of ATP in the presence of single-stranded DNA, the ATP-dependent uptake of single-stranded DNA by duplex DNA, and the ATP-dependent hybridization of homologous single-stranded DNAs. It interacts with LexA causing its activation and leading to its autocatalytic cleavage. This chain is Protein RecA, found in Prochlorococcus marinus (strain NATL1A).